Reading from the N-terminus, the 206-residue chain is Large ribosomal subunit protein eL13z (206 aa).

Residues 183–206 (ERTNKRHAGARAKRAADAEKEEKK) form a disordered region. The segment covering 186-195 (NKRHAGARAK) has biased composition (basic residues). A compositionally biased stretch (basic and acidic residues) spans 196–206 (RAADAEKEEKK).

It belongs to the eukaryotic ribosomal protein eL13 family.

The chain is Large ribosomal subunit protein eL13z from Brassica napus (Rape).